A 344-amino-acid chain; its full sequence is Dihydroorotate dehydrogenase (quinone) (344 aa).

FMN is bound by residues 61–65 (AGLDK) and Thr-85. Lys-65 serves as a coordination point for substrate. Substrate is bound at residue 110 to 114 (NRMGF). The FMN site is built by Asn-138 and Asn-171. Asn-171 serves as a coordination point for substrate. Ser-174 serves as the catalytic Nucleophile. Asn-176 contributes to the substrate binding site. The FMN site is built by Lys-216 and Thr-244. Position 245 to 246 (245 to 246 (NT)) interacts with substrate. FMN is bound by residues Gly-267, Gly-296, and 317–318 (YS).

This sequence belongs to the dihydroorotate dehydrogenase family. Type 2 subfamily. Monomer. It depends on FMN as a cofactor.

The protein localises to the cell membrane. It catalyses the reaction (S)-dihydroorotate + a quinone = orotate + a quinol. It functions in the pathway pyrimidine metabolism; UMP biosynthesis via de novo pathway; orotate from (S)-dihydroorotate (quinone route): step 1/1. Catalyzes the conversion of dihydroorotate to orotate with quinone as electron acceptor. The sequence is that of Dihydroorotate dehydrogenase (quinone) from Psychrobacter sp. (strain PRwf-1).